The primary structure comprises 504 residues: Anaerobic nitric oxide reductase transcription regulator NorR (504 aa).

Position 57 is a 4-aspartylphosphate (Asp57). The region spanning 187-416 (MIGLSPGMTQ…LEHAIHRAVV (230 aa)) is the Sigma-54 factor interaction domain. Residues 215–222 (GETGTGKE) and 278–287 (ADNGTLFLDE) each bind ATP. Positions 479 to 498 (WAACARMLETDVANLHRLAK) form a DNA-binding region, H-T-H motif.

The protein operates within nitrogen metabolism; nitric oxide reduction. Functionally, required for the expression of anaerobic nitric oxide (NO) reductase, acts as a transcriptional activator for at least the norVW operon. Activation also requires sigma-54. The protein is Anaerobic nitric oxide reductase transcription regulator NorR of Escherichia coli (strain ATCC 8739 / DSM 1576 / NBRC 3972 / NCIMB 8545 / WDCM 00012 / Crooks).